The chain runs to 635 residues: 1-deoxy-D-xylulose-5-phosphate synthase (635 aa).

Thiamine diphosphate contacts are provided by residues His74 and 115-117 (AHS). Asp146 serves as a coordination point for Mg(2+). Thiamine diphosphate is bound by residues 147–148 (GA), Asn176, Tyr283, and Glu365. Position 176 (Asn176) interacts with Mg(2+).

The protein belongs to the transketolase family. DXPS subfamily. Homodimer. Mg(2+) is required as a cofactor. It depends on thiamine diphosphate as a cofactor.

The catalysed reaction is D-glyceraldehyde 3-phosphate + pyruvate + H(+) = 1-deoxy-D-xylulose 5-phosphate + CO2. Its pathway is metabolic intermediate biosynthesis; 1-deoxy-D-xylulose 5-phosphate biosynthesis; 1-deoxy-D-xylulose 5-phosphate from D-glyceraldehyde 3-phosphate and pyruvate: step 1/1. Functionally, catalyzes the acyloin condensation reaction between C atoms 2 and 3 of pyruvate and glyceraldehyde 3-phosphate to yield 1-deoxy-D-xylulose-5-phosphate (DXP). In Paraburkholderia xenovorans (strain LB400), this protein is 1-deoxy-D-xylulose-5-phosphate synthase.